A 247-amino-acid chain; its full sequence is Coproheme decarboxylase (247 aa).

Fe-coproporphyrin III-binding positions include Arg129, 143 to 147 (YPMDK), His170, Gln183, and Ser221. Tyr143 is a catalytic residue.

This sequence belongs to the ChdC family. Type 1 subfamily. Fe-coproporphyrin III is required as a cofactor.

It catalyses the reaction Fe-coproporphyrin III + 2 H2O2 + 2 H(+) = heme b + 2 CO2 + 4 H2O. The catalysed reaction is Fe-coproporphyrin III + H2O2 + H(+) = harderoheme III + CO2 + 2 H2O. It carries out the reaction harderoheme III + H2O2 + H(+) = heme b + CO2 + 2 H2O. It functions in the pathway porphyrin-containing compound metabolism; protoheme biosynthesis. Its function is as follows. Involved in coproporphyrin-dependent heme b biosynthesis. Catalyzes the decarboxylation of Fe-coproporphyrin III (coproheme) to heme b (protoheme IX), the last step of the pathway. The reaction occurs in a stepwise manner with a three-propionate intermediate. This Bacillus cereus (strain ATCC 10987 / NRS 248) protein is Coproheme decarboxylase.